The primary structure comprises 276 residues: Diaminopimelate epimerase (276 aa).

The substrate site is built by Asn-13, Gln-46, and Asn-66. Residue Cys-75 is the Proton donor of the active site. Residues 76 to 77 (GN), Asn-159, Asn-192, and 210 to 211 (ER) each bind substrate. Residue Cys-219 is the Proton acceptor of the active site. 220–221 (GS) serves as a coordination point for substrate.

It belongs to the diaminopimelate epimerase family. Homodimer.

The protein resides in the cytoplasm. The enzyme catalyses (2S,6S)-2,6-diaminopimelate = meso-2,6-diaminopimelate. The protein operates within amino-acid biosynthesis; L-lysine biosynthesis via DAP pathway; DL-2,6-diaminopimelate from LL-2,6-diaminopimelate: step 1/1. Its function is as follows. Catalyzes the stereoinversion of LL-2,6-diaminopimelate (L,L-DAP) to meso-diaminopimelate (meso-DAP), a precursor of L-lysine and an essential component of the bacterial peptidoglycan. This Vibrio campbellii (strain ATCC BAA-1116) protein is Diaminopimelate epimerase.